The sequence spans 150 residues: Ventricular natriuretic peptide (150 aa).

Residues 1 to 21 form the signal peptide; that stretch reads MAKSGIYLGCFILILIQNMVA. The disordered stretch occupies residues 52–75; it reads EEPEVYPESEDMKMDAEEEDAGIS. C120 and C136 form a disulfide bridge.

This sequence belongs to the natriuretic peptide family. As to expression, heart ventricle, and to a lower extent in heart atrium.

It localises to the secreted. In terms of biological role, exhibits natriuretic and vasodepressor activity. The sequence is that of Ventricular natriuretic peptide (vnp) from Anguilla japonica (Japanese eel).